Reading from the N-terminus, the 229-residue chain is MNKNGLWNVLKKQFLPGQTKDGEKPKLTKYHYFLFVFVLGVSFMLVSQLFSSPEKTENAKTITAVSSQHSADSKEKTAEVFKASKSDKPKDSIDDYEKEYENQLKEILETIIGVDDVSVVVNVDATSLKVYEKNKSNKNTTTEETDKEGGKRSVTDQSSEEEIVMIKNGDKETPVVVQTKKPDIRGVLVVAQGVDNVQIKQTIIEAVTRVLDVPSHRVAVAPKKIKEDS.

Residues 30–50 (YHYFLFVFVLGVSFMLVSQLF) traverse the membrane as a helical segment. 2 disordered regions span residues 64 to 93 (AVSS…KDSI) and 136 to 159 (SNKN…DQSS). The span at 71-93 (ADSKEKTAEVFKASKSDKPKDSI) shows a compositional bias: basic and acidic residues.

The protein resides in the cell membrane. This is Stage III sporulation protein AG (spoIIIAG) from Bacillus subtilis (strain 168).